The following is a 72-amino-acid chain: Translation initiation factor IF-1 (72 aa).

An S1-like domain is found at 1 to 72 (MSKNDVIEVE…TRGRIVYRFK (72 aa)).

It belongs to the IF-1 family. Component of the 30S ribosomal translation pre-initiation complex which assembles on the 30S ribosome in the order IF-2 and IF-3, IF-1 and N-formylmethionyl-tRNA(fMet); mRNA recruitment can occur at any time during PIC assembly.

It localises to the cytoplasm. Its function is as follows. One of the essential components for the initiation of protein synthesis. Stabilizes the binding of IF-2 and IF-3 on the 30S subunit to which N-formylmethionyl-tRNA(fMet) subsequently binds. Helps modulate mRNA selection, yielding the 30S pre-initiation complex (PIC). Upon addition of the 50S ribosomal subunit IF-1, IF-2 and IF-3 are released leaving the mature 70S translation initiation complex. This is Translation initiation factor IF-1 from Desulforamulus reducens (strain ATCC BAA-1160 / DSM 100696 / MI-1) (Desulfotomaculum reducens).